The primary structure comprises 142 residues: Hemoglobin subunit alpha (142 aa).

Ser-1 carries the N-acetylserine modification. The Globin domain maps to 1–142 (SLSDKDKAAV…LSLALAEKYR (142 aa)). Heme b-binding residues include His-59 and His-88.

The protein belongs to the globin family. Heterotetramer of two alpha chains and two beta chains. Red blood cells.

Its function is as follows. Involved in oxygen transport from gills to the various peripheral tissues. The polypeptide is Hemoglobin subunit alpha (Lycodes reticulatus (Arctic eelpout)).